A 182-amino-acid chain; its full sequence is uncharacterized protein (182 aa).

Residues 17–34 traverse the membrane as a helical segment; the sequence is LSLVLFAVLSVLPLGGCA. 2 TPR repeats span residues 89–122 and 123–156; these read VDAAIRLTKALVAQKRPHEALQVLDNVLVVTPDN and LRALNAKAVILDIEGRHDAAQELYRQALETNPEN.

It localises to the membrane. This is an uncharacterized protein from Sinorhizobium fredii (strain NBRC 101917 / NGR234).